Consider the following 245-residue polypeptide: Probable transcriptional regulatory protein MAG6590 (245 aa).

This sequence belongs to the TACO1 family.

The protein localises to the cytoplasm. This Mycoplasmopsis agalactiae (strain NCTC 10123 / CIP 59.7 / PG2) (Mycoplasma agalactiae) protein is Probable transcriptional regulatory protein MAG6590.